Here is a 238-residue protein sequence, read N- to C-terminus: Cysteine-rich venom protein pseudechetoxin-like (238 aa).

A signal peptide spans 1-19; that stretch reads MIAFTVLLSLAAVLQQSSG. A propeptide spanning residues 20–28 is cleaved from the precursor; the sequence is TVDFASESS. An SCP domain is found at 38–164; sequence VDKHNDLRRS…STKYLYVCQY (127 aa). Intrachain disulfides connect Cys75/Cys153, Cys92/Cys165, Cys148/Cys162, Cys184/Cys191, Cys187/Cys196, Cys200/Cys233, Cys209/Cys227, and Cys218/Cys231. Positions 200 to 233 constitute a ShKT domain; that stretch reads CKHNNDFSNCKALAKKSKCQTEWIKSKCPATCFC.

This sequence belongs to the CRISP family. In terms of tissue distribution, expressed by the venom gland.

It is found in the secreted. Functionally, blocks olfactory (CNGA2) and retinal (CNGA1) CNG channel currents. Does not affect neither depolarization- nor caffeine-induced contraction of smooth muscle. The protein is Cysteine-rich venom protein pseudechetoxin-like of Oxyuranus scutellatus scutellatus (Australian taipan).